The primary structure comprises 437 residues: Phosphoglucosamine mutase (437 aa).

Serine 101 serves as the catalytic Phosphoserine intermediate. Mg(2+)-binding residues include serine 101, aspartate 234, aspartate 236, and aspartate 238. A Phosphoserine modification is found at serine 101.

It belongs to the phosphohexose mutase family. Requires Mg(2+) as cofactor. Activated by phosphorylation.

It carries out the reaction alpha-D-glucosamine 1-phosphate = D-glucosamine 6-phosphate. Its function is as follows. Catalyzes the conversion of glucosamine-6-phosphate to glucosamine-1-phosphate. In Thermus thermophilus (strain ATCC BAA-163 / DSM 7039 / HB27), this protein is Phosphoglucosamine mutase.